A 564-amino-acid chain; its full sequence is MFS-type efflux transporter ffsH (564 aa).

A compositionally biased stretch (basic and acidic residues) spans 1–18; that stretch reads MSEAEKKASQDAQHKEPM. Residues 1–37 form a disordered region; that stretch reads MSEAEKKASQDAQHKEPMADSETQLDSDSAPSSQAEK. Over residues 21-35 the composition is skewed to polar residues; the sequence is SETQLDSDSAPSSQA. The next 4 membrane-spanning stretches (helical) occupy residues 43–63, 98–118, 131–151, and 157–177; these read YPLSFWLAFGALCLTGLISAM, YVMILATAIFLLGSGICGGAN, GIGAGGINMLVDLIICDLVPM, and FIGLLFLFVSIGTTSGPIIGG. N182 carries N-linked (GlcNAc...) asparagine glycosylation. 9 helical membrane-spanning segments follow: residues 187–207, 226–246, 254–274, 300–320, 334–354, 362–382, 389–409, 427–447, and 502–522; these read WVFYINLPMGGAALVLLVLFL, VVGNAILVGATFSILYALTYG, AANIVAPFVLGFVGLGIFIAW, FFISFMTMILAFWVVYFYPVY, VHLLPFEVSFPIFAAVGGGLV, PIHMVATSIVTIAIGASSVLT, AWAVLQIFIGMGLGSLISTTL, TWAYMRSLGTIWGVSVPAAIF, and VWLVSIAFGAVTVLSTLFEKE. Positions 540–564 are disordered; sequence GDAKGDVERGEGQNDSREGGQNENV. A glycan (N-linked (GlcNAc...) asparagine) is linked at N553.

It belongs to the major facilitator superfamily.

It is found in the cell membrane. MFS-type efflux transporter; part of the gene cluster that mediates the biosynthesis of the cytotoxic leucine-containing cytochalasans, including aspochalasin C, aspochalasin E, TMC-169, flavichalasine F, aspergillin PZ, aspochalasin M and flavichalasine G. FfsH might be involved in the excretion of cytochalasans. The sequence is that of MFS-type efflux transporter ffsH from Aspergillus flavipes.